Reading from the N-terminus, the 4065-residue chain is Polyketide synthase-nonribosomal peptide synthetase pyiS (4065 aa).

The region spanning 6-440 is the Ketosynthase family 3 (KS3) domain; sequence SEPVAIIGTG…GANCHAILEA (435 aa). Active-site for beta-ketoacyl synthase activity residues include C179, H314, and H360. The segment at 552 to 875 is acyl transferase; the sequence is IFTGQGAQWP…PYTGVLSRGK (324 aa). The tract at residues 950 to 1087 is N-terminal hotdog fold; that stretch reads NELLGRQILD…CDVLVTYGDS (138 aa). Residues 950–1260 form the PKS/mFAS DH domain; it reads NELLGRQILD…TQPLFNPTEA (311 aa). The tract at residues 951–1254 is dehydratase (DH) domain; it reads ELLGRQILDG…QVEGLQTQPL (304 aa). The Proton acceptor; for dehydratase activity role is filled by H982. The segment at 1102 to 1260 is C-terminal hotdog fold; it reads EYFMLGVESD…TQPLFNPTEA (159 aa). D1166 acts as the Proton donor; for dehydratase activity in catalysis. The segment at 1409–1593 is methyltransferase (MT) domain; that stretch reads AHGMPRYTKY…KQTGFSGIDT (185 aa). A ketoreductase (KR)domain region spans residues 2129–2302; the sequence is TYWLVGLSGT…NASVVHIGAI (174 aa). The Carrier 1 domain maps to 2411–2492; that stretch reads INSAEVYEII…EILETAQQLL (82 aa). At S2452 the chain carries O-(pantetheine 4'-phosphoryl)serine. Residues 2497-2561 form a disordered region; the sequence is LPKMDPNDKS…GAKKGETVSK (65 aa). A compositionally biased stretch (basic and acidic residues) spans 2551–2561; sequence SGAKKGETVSK. Residues 2645–3076 are condensation; sequence SKKTPISFAQ…FSRNQALRLA (432 aa). The interval 3112–3516 is adenylation; that stretch reads DIAKQKSHSL…RLLLEGRIAD (405 aa). One can recognise a Carrier 2 domain in the interval 3634 to 3714; sequence QDLNDTESRL…DMAALVDELS (81 aa). S3674 bears the O-(pantetheine 4'-phosphoryl)serine mark. Residues 3760–3975 are reductase-like; that stretch reads LTGSTGFLGR…LDFISVDEAA (216 aa).

It belongs to the NRP synthetase family.

It participates in mycotoxin biosynthesis. Its function is as follows. Hybrid PKS-NRPS synthetase; part of the gene cluster that mediates the biosynthesis of the mycotoxin pyrichalasin H, a tyrosine-derived cytochalasan that inhibits the growth of rice seedlings, but also inhibits lymphocyte capping and actin polymerization and alters cell morphology. Pyrichalasin H is indicated as the responsible agent for the genus-specific pathogenicity of M.grisea toward crabgrass. The first step in the pathway is catalyzed by the O-methyltransferase pyiA which methylates free tyrosine to generate the precursor O-methyltyrosine. The hybrid PKS-NRPS pyiS, assisted by the enoyl reductase pyiC, are responsible for fusion of the O-methyltyrosine precursor and the polyketide backbone. The polyketide synthase module (PKS) of pyiS is responsible for the synthesis of the polyketide backbone and the downstream nonribosomal peptide synthetase (NRPS) amidates the carboxyl end of the polyketide with the O-methyltyrosine precursor. As the NRPS A-domain demonstrates substrate tolerance, pyiS can also use phenylalanine, tyrosine and even para-chlorophenylalanine as amino acid precursor, which leads to the production of novel cytochalasans, including halogenated cytochalasans. Because pyiS lacks a designated enoylreductase (ER) domain, the required activity is provided the enoyl reductase pyiC. Reduction by the hydrolyase pyiE leads to 1,5-dihydropyrrolone, which is substrate for dehydration and intra-molecular Diels-Alder cyclization by the Diels-Alderase pyiF to yield the required isoindolone-fused macrocycle. The tailoring cytochrome P450 monooxygenases piyD and piyG catalyze the hydroxylation at C-18 and C-7, respectivily, whereas the short-chain dehydrogenase/reductase pyiH reduces the carbonyl at C-21 in preparation for the transfer of an acetyl group by the acetyltransferase pyiB. These 3 reactions whose order is not clear yet, lead to the production of O-methylpyrichalasin J, a deacetylated pyrichalasin H. Finally, pyiB to converts O-methylpyrichalasin J into the final product pyrichalasin H via acetylation of C-21. In Pyricularia grisea (Crabgrass-specific blast fungus), this protein is Polyketide synthase-nonribosomal peptide synthetase pyiS.